The primary structure comprises 361 residues: tRNA-specific 2-thiouridylase MnmA (361 aa).

Residues 10 to 17 (GMSGGVDS) and Met-36 contribute to the ATP site. Cys-104 acts as the Nucleophile in catalysis. Cys-104 and Cys-202 are oxidised to a cystine. Gly-128 contributes to the ATP binding site. Residues 152 to 154 (KDQ) form an interaction with tRNA region. Catalysis depends on Cys-202, which acts as the Cysteine persulfide intermediate. Positions 308–309 (RY) are interaction with tRNA.

Belongs to the MnmA/TRMU family.

The protein resides in the cytoplasm. It carries out the reaction S-sulfanyl-L-cysteinyl-[protein] + uridine(34) in tRNA + AH2 + ATP = 2-thiouridine(34) in tRNA + L-cysteinyl-[protein] + A + AMP + diphosphate + H(+). Its function is as follows. Catalyzes the 2-thiolation of uridine at the wobble position (U34) of tRNA, leading to the formation of s(2)U34. This is tRNA-specific 2-thiouridylase MnmA from Clostridioides difficile (strain 630) (Peptoclostridium difficile).